A 159-amino-acid polypeptide reads, in one-letter code: Cyclic pyranopterin monophosphate synthase (159 aa).

Residues 76-78 and 114-115 each bind substrate; these read MCH and ME. The active site involves Asp129.

This sequence belongs to the MoaC family. Homohexamer; trimer of dimers.

It carries out the reaction (8S)-3',8-cyclo-7,8-dihydroguanosine 5'-triphosphate = cyclic pyranopterin phosphate + diphosphate. The protein operates within cofactor biosynthesis; molybdopterin biosynthesis. In terms of biological role, catalyzes the conversion of (8S)-3',8-cyclo-7,8-dihydroguanosine 5'-triphosphate to cyclic pyranopterin monophosphate (cPMP). The chain is Cyclic pyranopterin monophosphate synthase from Natranaerobius thermophilus (strain ATCC BAA-1301 / DSM 18059 / JW/NM-WN-LF).